The sequence spans 838 residues: DNA gyrase subunit A (838 aa).

An N-acetylthreonine modification is found at Thr2. The Topo IIA-type catalytic domain occupies Leu41 to Leu510. Residue Tyr129 is the O-(5'-phospho-DNA)-tyrosine intermediate of the active site. Ca(2+) is bound by residues Asp504, Ser506, Glu508, and Asp515. The EF-hand domain occupies Asp504–Val516. The tract at residues Glu514–Asn838 is C-terminal domain CTD. The short motif at Gln537 to Gly543 is the GyrA-box element. Residues Gln743–Gly749 carry the GyrA-box-1 motif.

Belongs to the type II topoisomerase GyrA/ParC subunit family. As to quaternary structure, heterotetramer, composed of two GyrA and two GyrB chains. In the heterotetramer, GyrA contains the active site tyrosine that forms a transient covalent intermediate with DNA, while GyrB binds cofactors and catalyzes ATP hydrolysis. The cofactor is Ca(2+).

The protein resides in the cytoplasm. The enzyme catalyses ATP-dependent breakage, passage and rejoining of double-stranded DNA.. DNA supercoiling inhibited by (fluoro)quinoline antibiotics such as sparfloxacin and levofloxacin, which usually act on GyrA. DNA supercoiling inhibited by the coumarin antibiotic novobiocin which acts on GyrB. Quinolones lead to gyrase-mediated dsDNA cleavage while preventing reclosure. DNA supercoiling activity inhibited by aminopyrazinamide and pyrrolamide derivatives, probably via effects on the GyrB subunit. DNA relaxation inhibited by ATP and its analogs. DNA supercoiling, relaxation, decatenation and quinolone-promoted DNA cleavage are inhibited by MfpA (50% inhibition occurs at 2 uM), inhibition of gyrase activities is enhanced in a concentration-dependent manner by MfpA. In terms of biological role, a type II topoisomerase that negatively supercoils closed circular double-stranded (ds) DNA in an ATP-dependent manner to maintain chromosomes in an underwound state, while in the absence of ATP it relaxes supercoiled dsDNA. Also catalyzes the interconversion of other topological isomers of dsDNA rings, including catenanes. Gyrase from M.tuberculosis has higher decatenation than supercoiling activity compared to E.coli; as M.tuberculosis only has 1 type II topoisomerase, gyrase has to fulfill the decatenation function of topoisomerase IV as well. At comparable concentrations M.tuberculosis gyrase cannot introduce as many negative supercoils into DNA as the E.coli enzyme, and its ATPase activity is lower, perhaps because it does not couple DNA wrapping and ATP binding as well as E.coli. Negative supercoiling favors strand separation, and DNA replication, transcription, recombination and repair, all of which involve strand separation. Type II topoisomerases break and join 2 DNA strands simultaneously in an ATP-dependent manner. The sequence is that of DNA gyrase subunit A from Mycobacterium tuberculosis (strain ATCC 25618 / H37Rv).